A 515-amino-acid chain; its full sequence is Probable cytosol aminopeptidase (515 aa).

Mn(2+)-binding residues include K274 and D279. Residue K286 is part of the active site. Mn(2+) is bound by residues D297, D356, and E358. The active site involves R360.

This sequence belongs to the peptidase M17 family. Mn(2+) is required as a cofactor.

The protein resides in the cytoplasm. The enzyme catalyses Release of an N-terminal amino acid, Xaa-|-Yaa-, in which Xaa is preferably Leu, but may be other amino acids including Pro although not Arg or Lys, and Yaa may be Pro. Amino acid amides and methyl esters are also readily hydrolyzed, but rates on arylamides are exceedingly low.. It carries out the reaction Release of an N-terminal amino acid, preferentially leucine, but not glutamic or aspartic acids.. In terms of biological role, presumably involved in the processing and regular turnover of intracellular proteins. Catalyzes the removal of unsubstituted N-terminal amino acids from various peptides. The protein is Probable cytosol aminopeptidase of Desulforapulum autotrophicum (strain ATCC 43914 / DSM 3382 / VKM B-1955 / HRM2) (Desulfobacterium autotrophicum).